Here is a 282-residue protein sequence, read N- to C-terminus: HTH-type transcriptional activator RhaR (282 aa).

An HTH araC/xylS-type domain is found at 179–277 (DKLITRLAAS…GMTPSQWRHL (99 aa)). 2 DNA-binding regions (H-T-H motif) span residues 196–217 (DKFC…RQQT) and 244–267 (ISDI…TRET).

In terms of assembly, binds DNA as a dimer.

It localises to the cytoplasm. Functionally, activates expression of the rhaSR operon in response to L-rhamnose. This chain is HTH-type transcriptional activator RhaR, found in Shigella flexneri serotype 5b (strain 8401).